Reading from the N-terminus, the 951-residue chain is Bifunctional glutamine synthetase adenylyltransferase/adenylyl-removing enzyme (951 aa).

Residues 1 to 440 (MLPLPSELQI…VFDDLIGDET (440 aa)) form an adenylyl removase region. Residues 449–951 (HGLYKSLWQD…WLAANDANVS (503 aa)) are adenylyl transferase.

This sequence belongs to the GlnE family. Mg(2+) serves as cofactor.

It catalyses the reaction [glutamine synthetase]-O(4)-(5'-adenylyl)-L-tyrosine + phosphate = [glutamine synthetase]-L-tyrosine + ADP. The enzyme catalyses [glutamine synthetase]-L-tyrosine + ATP = [glutamine synthetase]-O(4)-(5'-adenylyl)-L-tyrosine + diphosphate. Its function is as follows. Involved in the regulation of glutamine synthetase GlnA, a key enzyme in the process to assimilate ammonia. When cellular nitrogen levels are high, the C-terminal adenylyl transferase (AT) inactivates GlnA by covalent transfer of an adenylyl group from ATP to specific tyrosine residue of GlnA, thus reducing its activity. Conversely, when nitrogen levels are low, the N-terminal adenylyl removase (AR) activates GlnA by removing the adenylyl group by phosphorolysis, increasing its activity. The regulatory region of GlnE binds the signal transduction protein PII (GlnB) which indicates the nitrogen status of the cell. The chain is Bifunctional glutamine synthetase adenylyltransferase/adenylyl-removing enzyme from Yersinia pestis bv. Antiqua (strain Antiqua).